A 361-amino-acid polypeptide reads, in one-letter code: Peptide chain release factor 1 (361 aa).

Glutamine 238 is subject to N5-methylglutamine.

It belongs to the prokaryotic/mitochondrial release factor family. Methylated by PrmC. Methylation increases the termination efficiency of RF1.

The protein resides in the cytoplasm. Peptide chain release factor 1 directs the termination of translation in response to the peptide chain termination codons UAG and UAA. This Mesomycoplasma hyopneumoniae (strain 7448) (Mycoplasma hyopneumoniae) protein is Peptide chain release factor 1.